The chain runs to 207 residues: Urease accessory protein UreG (207 aa).

Position 16–23 (16–23 (GPVGSGKT)) interacts with GTP.

It belongs to the SIMIBI class G3E GTPase family. UreG subfamily. Homodimer. UreD, UreF and UreG form a complex that acts as a GTP-hydrolysis-dependent molecular chaperone, activating the urease apoprotein by helping to assemble the nickel containing metallocenter of UreC. The UreE protein probably delivers the nickel.

It localises to the cytoplasm. Facilitates the functional incorporation of the urease nickel metallocenter. This process requires GTP hydrolysis, probably effectuated by UreG. The sequence is that of Urease accessory protein UreG from Shewanella halifaxensis (strain HAW-EB4).